Reading from the N-terminus, the 466-residue chain is 3-isopropylmalate dehydratase large subunit (466 aa).

3 residues coordinate [4Fe-4S] cluster: C347, C407, and C410.

Belongs to the aconitase/IPM isomerase family. LeuC type 1 subfamily. Heterodimer of LeuC and LeuD. The cofactor is [4Fe-4S] cluster.

The enzyme catalyses (2R,3S)-3-isopropylmalate = (2S)-2-isopropylmalate. Its pathway is amino-acid biosynthesis; L-leucine biosynthesis; L-leucine from 3-methyl-2-oxobutanoate: step 2/4. Its function is as follows. Catalyzes the isomerization between 2-isopropylmalate and 3-isopropylmalate, via the formation of 2-isopropylmaleate. The polypeptide is 3-isopropylmalate dehydratase large subunit (Buchnera aphidicola subsp. Diuraphis noxia).